The chain runs to 404 residues: Probable tRNA sulfurtransferase (404 aa).

The 106-residue stretch at 60–165 folds into the THUMP domain; the sequence is EEVIPKLSKV…KDAAYLSYET (106 aa). ATP contacts are provided by residues 183–184, 208–209, Arg-265, Gly-287, and Gln-296; these read ML and HF.

It belongs to the ThiI family.

Its subcellular location is the cytoplasm. The catalysed reaction is [ThiI sulfur-carrier protein]-S-sulfanyl-L-cysteine + a uridine in tRNA + 2 reduced [2Fe-2S]-[ferredoxin] + ATP + H(+) = [ThiI sulfur-carrier protein]-L-cysteine + a 4-thiouridine in tRNA + 2 oxidized [2Fe-2S]-[ferredoxin] + AMP + diphosphate. The enzyme catalyses [ThiS sulfur-carrier protein]-C-terminal Gly-Gly-AMP + S-sulfanyl-L-cysteinyl-[cysteine desulfurase] + AH2 = [ThiS sulfur-carrier protein]-C-terminal-Gly-aminoethanethioate + L-cysteinyl-[cysteine desulfurase] + A + AMP + 2 H(+). It participates in cofactor biosynthesis; thiamine diphosphate biosynthesis. Its function is as follows. Catalyzes the ATP-dependent transfer of a sulfur to tRNA to produce 4-thiouridine in position 8 of tRNAs, which functions as a near-UV photosensor. Also catalyzes the transfer of sulfur to the sulfur carrier protein ThiS, forming ThiS-thiocarboxylate. This is a step in the synthesis of thiazole, in the thiamine biosynthesis pathway. The sulfur is donated as persulfide by IscS. The polypeptide is Probable tRNA sulfurtransferase (Enterococcus faecalis (strain ATCC 700802 / V583)).